We begin with the raw amino-acid sequence, 829 residues long: Receptor-type tyrosine-protein phosphatase alpha (829 aa).

A signal peptide spans methionine 1–alanine 19. At asparagine 20–proline 142 the chain is on the extracellular side. N-linked (GlcNAc...) asparagine glycans are attached at residues asparagine 21, asparagine 47, asparagine 51, asparagine 68, asparagine 80, asparagine 86, asparagine 104, and asparagine 124. Residues valine 79 to serine 106 form a disordered region. A helical membrane pass occupies residues isoleucine 143–leucine 166. The Cytoplasmic portion of the chain corresponds to arginine 167–lysine 829. Phosphoserine occurs at positions 202 and 204. 2 consecutive Tyrosine-protein phosphatase domains span residues phenylalanine 232–histidine 528 and leucine 560–tyrosine 818. Residues aspartate 437, cysteine 469–arginine 475, and glutamine 513 contribute to the substrate site. Cysteine 469 serves as the catalytic Phosphocysteine intermediate. The active-site Phosphocysteine intermediate is cysteine 759. Tyrosine 825 carries the post-translational modification Phosphotyrosine.

The protein belongs to the protein-tyrosine phosphatase family. Receptor class 4 subfamily. As to quaternary structure, part of a complex comprised of PTPRA, BCAR1, BCAR3 (via SH2 domain), and SRC. Within the complex, interacts (when phosphorylated on Tyr-825) with BCAR3 (via SH2 domain). Interacts with GRB2. Integrin binding to extracellular matrix induces phosphorylation at Tyr-825 which induces PTPRA localization and recruitment of BCAR3, BCAR1 and CRK to focal adhesions. Widely expressed. Highest expression in brain and kidney.

It is found in the cell membrane. Its subcellular location is the cell junction. The protein localises to the focal adhesion. It catalyses the reaction O-phospho-L-tyrosyl-[protein] + H2O = L-tyrosyl-[protein] + phosphate. Functionally, tyrosine protein phosphatase which is involved in integrin-mediated focal adhesion formation. Following integrin engagement, specifically recruits BCAR3, BCAR1 and CRK to focal adhesions thereby promoting SRC-mediated phosphorylation of BRAC1 and the subsequent activation of PAK and small GTPase RAC1 and CDC42. This Mus musculus (Mouse) protein is Receptor-type tyrosine-protein phosphatase alpha (Ptpra).